Reading from the N-terminus, the 367-residue chain is Anhydro-N-acetylmuramic acid kinase (367 aa).

11–18 is an ATP binding site; sequence GTSLDGVD.

This sequence belongs to the anhydro-N-acetylmuramic acid kinase family.

It carries out the reaction 1,6-anhydro-N-acetyl-beta-muramate + ATP + H2O = N-acetyl-D-muramate 6-phosphate + ADP + H(+). It functions in the pathway amino-sugar metabolism; 1,6-anhydro-N-acetylmuramate degradation. Its pathway is cell wall biogenesis; peptidoglycan recycling. Functionally, catalyzes the specific phosphorylation of 1,6-anhydro-N-acetylmuramic acid (anhMurNAc) with the simultaneous cleavage of the 1,6-anhydro ring, generating MurNAc-6-P. Is required for the utilization of anhMurNAc either imported from the medium or derived from its own cell wall murein, and thus plays a role in cell wall recycling. This Rhodopseudomonas palustris (strain ATCC BAA-98 / CGA009) protein is Anhydro-N-acetylmuramic acid kinase.